The following is a 230-amino-acid chain: Demethylmenaquinone methyltransferase (230 aa).

Residues T62, D80, D100–A101, and S117 contribute to the S-adenosyl-L-methionine site.

This sequence belongs to the class I-like SAM-binding methyltransferase superfamily. MenG/UbiE family.

The catalysed reaction is a 2-demethylmenaquinol + S-adenosyl-L-methionine = a menaquinol + S-adenosyl-L-homocysteine + H(+). The protein operates within quinol/quinone metabolism; menaquinone biosynthesis; menaquinol from 1,4-dihydroxy-2-naphthoate: step 2/2. Methyltransferase required for the conversion of demethylmenaquinol (DMKH2) to menaquinol (MKH2). The protein is Demethylmenaquinone methyltransferase of Mycobacterium sp. (strain KMS).